The following is an 884-amino-acid chain: DNA replication licensing factor mcm2 (884 aa).

Residues M1–T16 are compositionally biased toward polar residues. 2 disordered regions span residues M1–A61 and L120–E151. The segment covering P47–I58 has biased composition (acidic residues). The C4-type zinc finger occupies C314–C340. Positions I458–V664 constitute an MCM domain. The ADP site is built by S515 and Q516. The short motif at S640 to D643 is the Arginine finger element.

This sequence belongs to the MCM family. As to quaternary structure, component of the mcm2-7 complex (RLF-M). The complex forms a toroidal hexameric ring with the proposed subunit order mcm2-mcm6-mcm4-mcm7-mcm3-mcm5. Component of the replisome complex. Component of the CMG helicase complex, composed of the mcm2-7 complex, the GINS complex and cdc45. Post-translationally, may be in a phosphorylated state in the mitotic mcm complex. Phosphorylated in the interphase mcm complex. Phosphorylated by the cdc7-dbf4 and cdc7-dbf4b complexes.

It localises to the nucleus. Its subcellular location is the chromosome. It catalyses the reaction ATP + H2O = ADP + phosphate + H(+). Acts as a component of the MCM2-7 complex (MCM complex) which is the replicative helicase essential for 'once per cell cycle' DNA replication initiation and elongation in eukaryotic cells. Core component of CDC45-MCM-GINS (CMG) helicase, the molecular machine that unwinds template DNA during replication, and around which the replisome is built. The active ATPase sites in the MCM2-7 ring are formed through the interaction surfaces of two neighboring subunits such that a critical structure of a conserved arginine finger motif is provided in trans relative to the ATP-binding site of the Walker A box of the adjacent subunit. The six ATPase active sites, however, are likely to contribute differentially to the complex helicase activity. Required for the entry in S phase and for cell division. The polypeptide is DNA replication licensing factor mcm2 (Xenopus tropicalis (Western clawed frog)).